The primary structure comprises 254 residues: Pimeloyl-[acyl-carrier protein] methyl ester esterase (254 aa).

An AB hydrolase-1 domain is found at 14–238; the sequence is VVMLHGWGLH…QASHAPFLSH (225 aa). Substrate is bound by residues tryptophan 20, 80–81, and 142–146; these read SL and FLALQ. The Nucleophile role is filled by serine 80. Active-site residues include aspartate 204 and histidine 232. A substrate-binding site is contributed by histidine 232.

Belongs to the AB hydrolase superfamily. Carboxylesterase BioH family. In terms of assembly, monomer.

It is found in the cytoplasm. The catalysed reaction is 6-carboxyhexanoyl-[ACP] methyl ester + H2O = 6-carboxyhexanoyl-[ACP] + methanol + H(+). It functions in the pathway cofactor biosynthesis; biotin biosynthesis. Functionally, the physiological role of BioH is to remove the methyl group introduced by BioC when the pimeloyl moiety is complete. It allows to synthesize pimeloyl-ACP via the fatty acid synthetic pathway through the hydrolysis of the ester bonds of pimeloyl-ACP esters. The sequence is that of Pimeloyl-[acyl-carrier protein] methyl ester esterase from Chromobacterium violaceum (strain ATCC 12472 / DSM 30191 / JCM 1249 / CCUG 213 / NBRC 12614 / NCIMB 9131 / NCTC 9757 / MK).